The primary structure comprises 449 residues: Probable glycine dehydrogenase (decarboxylating) subunit 1 (449 aa).

The protein belongs to the GcvP family. N-terminal subunit subfamily. As to quaternary structure, the glycine cleavage system is composed of four proteins: P, T, L and H. In this organism, the P 'protein' is a heterodimer of two subunits.

The enzyme catalyses N(6)-[(R)-lipoyl]-L-lysyl-[glycine-cleavage complex H protein] + glycine + H(+) = N(6)-[(R)-S(8)-aminomethyldihydrolipoyl]-L-lysyl-[glycine-cleavage complex H protein] + CO2. The glycine cleavage system catalyzes the degradation of glycine. The P protein binds the alpha-amino group of glycine through its pyridoxal phosphate cofactor; CO(2) is released and the remaining methylamine moiety is then transferred to the lipoamide cofactor of the H protein. The sequence is that of Probable glycine dehydrogenase (decarboxylating) subunit 1 from Rhodospirillum centenum (strain ATCC 51521 / SW).